We begin with the raw amino-acid sequence, 184 residues long: UPF0316 protein YebE (184 aa).

The next 3 membrane-spanning stretches (helical) occupy residues 9–29 (GIAM…FFTI), 41–61 (LAAG…SLVL), and 67–87 (IQNV…GMKI).

It belongs to the UPF0316 family.

Its subcellular location is the cell membrane. The sequence is that of UPF0316 protein YebE (yebE) from Bacillus subtilis (strain 168).